An 884-amino-acid chain; its full sequence is Translation initiation factor IF-2 (884 aa).

The tract at residues 93–288 is disordered; that stretch reads VNTPEAEQAK…KGKRKPSTLQ (196 aa). The span at 99-209 shows a compositional bias: basic and acidic residues; it reads EQAKAEEQAQ…KMAAENEGKW (111 aa). Polar residues predominate over residues 216 to 229; it reads QTESADYHVTTSQH. Residues 231–246 show a composition bias toward basic and acidic residues; the sequence is RAAEDENDAKVEGDRR. A compositionally biased stretch (basic residues) spans 247–261; the sequence is SRTRGGKATKQKKGN. The segment covering 262-275 has biased composition (basic and acidic residues); the sequence is KLSESKADREEARA. The tr-type G domain maps to 383-552; the sequence is HRAPVVTIMG…LLQAEVLELK (170 aa). Residues 392–399 form a G1 region; the sequence is GHVDHGKT. GTP is bound at residue 392 to 399; that stretch reads GHVDHGKT. Residues 417 to 421 form a G2 region; that stretch reads GITQH. The tract at residues 438-441 is G3; the sequence is DTPG. Residues 438–442 and 492–495 contribute to the GTP site; these read DTPGH and NKID. The interval 492–495 is G4; it reads NKID. The G5 stretch occupies residues 528-530; sequence SAK.

The protein belongs to the TRAFAC class translation factor GTPase superfamily. Classic translation factor GTPase family. IF-2 subfamily.

It localises to the cytoplasm. In terms of biological role, one of the essential components for the initiation of protein synthesis. Protects formylmethionyl-tRNA from spontaneous hydrolysis and promotes its binding to the 30S ribosomal subunits. Also involved in the hydrolysis of GTP during the formation of the 70S ribosomal complex. The polypeptide is Translation initiation factor IF-2 (Yersinia pestis bv. Antiqua (strain Angola)).